The chain runs to 366 residues: L-tyrosine C(3)-methyltransferase (366 aa).

Residues 1-12 are compositionally biased toward polar residues; it reads MTISLENTTVGQ. The interval 1–22 is disordered; it reads MTISLENTTVGQNPAGGPPTGK. Glutamate 223 lines the S-adenosyl-L-methionine pocket.

This sequence belongs to the class I-like SAM-binding methyltransferase superfamily. Cation-independent O-methyltransferase family.

The enzyme catalyses L-tyrosine + S-adenosyl-L-methionine = 3-methyl-L-tyrosine + S-adenosyl-L-homocysteine + H(+). Its pathway is antibiotic biosynthesis. C-methyltransferase that mediates the methylation of tyrosine into 3-methyl-L-tyrosine (3-Me-Tyr) in biosynthesis of saframycin A, a potent antitumor antibiotic that belongs to the tetrahydroisoquinoline family. Involved in biosynthesis of 3-hydroxy-5-methyl-O-methyltyrosine (3-OH-5-Me-OMe-Tyr), a core structure of saframycin A. In Streptomyces lavendulae, this protein is L-tyrosine C(3)-methyltransferase.